Consider the following 410-residue polypeptide: Heat stress transcription factor A-9 (410 aa).

The disordered stretch occupies residues 1–44 (MGSKKRSPQHPAAAAPPPAVGGGGGGEVSGDGGASTANGPVVPK). Over residues 20–33 (VGGGGGGEVSGDGG) the composition is skewed to gly residues. Positions 171–246 (GLEKEVETLK…QLVQQQQQQR (76 aa)) form a coiled coil. The segment at 179–229 (LKRDKALLMQQLVDLRHYQQTSNLEVQNLIERLQVMEQNQQQMMALLAIVV) is hydrophobic repeat HR-A/B. The short motif at 256 to 260 (SKKRR) is the Nuclear localization signal element. Residues 279 to 290 (AHIVEYLPPVPE) carry the Nuclear export signal motif.

The protein belongs to the HSF family. Class A subfamily. Homotrimer. In terms of processing, exhibits temperature-dependent phosphorylation.

It is found in the cytoplasm. Its subcellular location is the nucleus. Transcriptional regulator that specifically binds DNA of heat shock promoter elements (HSE). The sequence is that of Heat stress transcription factor A-9 (HSFA9) from Oryza sativa subsp. japonica (Rice).